A 174-amino-acid polypeptide reads, in one-letter code: Ribulose bisphosphate carboxylase small subunit, chloroplastic (174 aa).

The N-terminal 45 residues, 1–45 (MAPTVMASSATSVAPFQGLKSTAGLPVSRRSNASSASVSNGGRIR), are a transit peptide targeting the chloroplast.

Belongs to the RuBisCO small chain family. In terms of assembly, heterohexadecamer of 8 large and 8 small subunits.

It localises to the plastid. It is found in the chloroplast. In terms of biological role, ruBisCO catalyzes two reactions: the carboxylation of D-ribulose 1,5-bisphosphate, the primary event in carbon dioxide fixation, as well as the oxidative fragmentation of the pentose substrate. Both reactions occur simultaneously and in competition at the same active site. Although the small subunit is not catalytic it is essential for maximal activity. The chain is Ribulose bisphosphate carboxylase small subunit, chloroplastic from Hordeum vulgare (Barley).